The primary structure comprises 208 residues: Small ribosomal subunit protein uS4A (208 aa).

In terms of domain architecture, S4 RNA-binding spans 98–161 (LRLDNVVFRM…RKVLRISEAL (64 aa)).

The protein belongs to the universal ribosomal protein uS4 family. As to quaternary structure, part of the 30S ribosomal subunit. Contacts protein S5. The interaction surface between S4 and S5 is involved in control of translational fidelity.

Its function is as follows. One of the primary rRNA binding proteins, it binds directly to 16S rRNA where it nucleates assembly of the body of the 30S subunit. With S5 and S12 plays an important role in translational accuracy. This chain is Small ribosomal subunit protein uS4A, found in Myxococcus xanthus (strain DK1622).